We begin with the raw amino-acid sequence, 235 residues long: Fibrillarin-like rRNA/tRNA 2'-O-methyltransferase (235 aa).

S-adenosyl-L-methionine contacts are provided by residues 91 to 92 (TT), 110 to 111 (EF), 137 to 138 (DA), and 157 to 160 (DVAQ).

The protein belongs to the methyltransferase superfamily. Fibrillarin family. In terms of assembly, interacts with nop5. Component of box C/D small ribonucleoprotein (sRNP) particles that contain rpl7ae, FlpA and nop5, plus a guide RNA.

Functionally, involved in pre-rRNA and tRNA processing. Utilizes the methyl donor S-adenosyl-L-methionine to catalyze the site-specific 2'-hydroxyl methylation of ribose moieties in rRNA and tRNA. Site specificity is provided by a guide RNA that base pairs with the substrate. Methylation occurs at a characteristic distance from the sequence involved in base pairing with the guide RNA. In Pyrobaculum neutrophilum (strain DSM 2338 / JCM 9278 / NBRC 100436 / V24Sta) (Thermoproteus neutrophilus), this protein is Fibrillarin-like rRNA/tRNA 2'-O-methyltransferase.